A 236-amino-acid polypeptide reads, in one-letter code: Rab-like protein 3 (236 aa).

The segment at Met-1–Asp-236 is small GTPase-like. GTP-binding positions include Gly-16–Ser-21, Lys-148–Asp-150, and Asp-179–Cys-180.

The protein belongs to the small GTPase superfamily. Rab family. As to quaternary structure, homodimer. Interacts with GPR89; the interaction stabilizes GPR89. Interacts with RAP1GDS1.

Functionally, required for KRAS signaling regulation and modulation of cell proliferation. Regulator of KRAS prenylation, and probably prenylation of other small GTPases. Required for lymphocyte development and function. Not required for myeloid cell development. The chain is Rab-like protein 3 (RABL3) from Homo sapiens (Human).